The primary structure comprises 204 residues: Protein XpaC (204 aa).

In terms of biological role, in double copy it causes aberrant cell morphology, filamentation and inhibits sporulation. Hydrolyzes 5-bromo-4-chloroindolyl phosphate. This is Protein XpaC (xpaC) from Bacillus subtilis (strain 168).